The chain runs to 362 residues: Cobalt-precorrin-5B C(1)-methyltransferase (362 aa).

This sequence belongs to the CbiD family.

It catalyses the reaction Co-precorrin-5B + S-adenosyl-L-methionine = Co-precorrin-6A + S-adenosyl-L-homocysteine. It participates in cofactor biosynthesis; adenosylcobalamin biosynthesis; cob(II)yrinate a,c-diamide from sirohydrochlorin (anaerobic route): step 6/10. In terms of biological role, catalyzes the methylation of C-1 in cobalt-precorrin-5B to form cobalt-precorrin-6A. This chain is Cobalt-precorrin-5B C(1)-methyltransferase, found in Methanocaldococcus jannaschii (strain ATCC 43067 / DSM 2661 / JAL-1 / JCM 10045 / NBRC 100440) (Methanococcus jannaschii).